Consider the following 239-residue polypeptide: RNA polymerase sigma factor FliA (239 aa).

The sigma-70 factor domain-2 stretch occupies residues 16–88 (LWQRYVPLVR…MLDELRSRDW (73 aa)). An Interaction with polymerase core subunit RpoC motif is present at residues 43-46 (DLLQ). The interval 96–166 (NAREVAQAIG…IELVTDDHQR (71 aa)) is sigma-70 factor domain-3. Residues 185–233 (AIETLPEREKLVLTLYYQEELNLKEIGAVLEVGESRVSQLHSQAIKRLR) form a sigma-70 factor domain-4 region. A DNA-binding region (H-T-H motif) is located at residues 207-226 (LKEIGAVLEVGESRVSQLHS).

The protein belongs to the sigma-70 factor family. FliA subfamily.

The protein localises to the cytoplasm. Its function is as follows. Sigma factors are initiation factors that promote the attachment of RNA polymerase to specific initiation sites and are then released. This sigma factor controls the expression of flagella-related genes. The protein is RNA polymerase sigma factor FliA of Escherichia coli O157:H7.